The chain runs to 160 residues: S-adenosylmethionine decarboxylase proenzyme (160 aa).

Ser73 acts as the Schiff-base intermediate with substrate; via pyruvic acid in catalysis. A Pyruvic acid (Ser); by autocatalysis modification is found at Ser73. The active-site Proton acceptor; for processing activity is His78. Cys93 functions as the Proton donor; for catalytic activity in the catalytic mechanism.

It belongs to the prokaryotic AdoMetDC family. Type 1 subfamily. Heterotetramer of two alpha and two beta chains arranged as a dimer of alpha/beta heterodimers. Pyruvate is required as a cofactor. In terms of processing, is synthesized initially as an inactive proenzyme. Formation of the active enzyme involves a self-maturation process in which the active site pyruvoyl group is generated from an internal serine residue via an autocatalytic post-translational modification. Two non-identical subunits are generated from the proenzyme in this reaction, and the pyruvate is formed at the N-terminus of the alpha chain, which is derived from the carboxyl end of the proenzyme. The post-translation cleavage follows an unusual pathway, termed non-hydrolytic serinolysis, in which the side chain hydroxyl group of the serine supplies its oxygen atom to form the C-terminus of the beta chain, while the remainder of the serine residue undergoes an oxidative deamination to produce ammonia and the pyruvoyl group blocking the N-terminus of the alpha chain.

The enzyme catalyses S-adenosyl-L-methionine + H(+) = S-adenosyl 3-(methylsulfanyl)propylamine + CO2. Its pathway is amine and polyamine biosynthesis; S-adenosylmethioninamine biosynthesis; S-adenosylmethioninamine from S-adenosyl-L-methionine: step 1/1. Functionally, catalyzes the decarboxylation of S-adenosylmethionine to S-adenosylmethioninamine (dcAdoMet), the propylamine donor required for the synthesis of the polyamines spermine and spermidine from the diamine putrescine. This chain is S-adenosylmethionine decarboxylase proenzyme, found in Pseudomonas paraeruginosa (strain DSM 24068 / PA7) (Pseudomonas aeruginosa (strain PA7)).